The primary structure comprises 187 residues: Peptidyl-tRNA hydrolase (187 aa).

Residue tyrosine 18 coordinates tRNA. The active-site Proton acceptor is histidine 23. Phenylalanine 65, asparagine 67, and asparagine 113 together coordinate tRNA.

It belongs to the PTH family. Monomer.

Its subcellular location is the cytoplasm. It carries out the reaction an N-acyl-L-alpha-aminoacyl-tRNA + H2O = an N-acyl-L-amino acid + a tRNA + H(+). Its function is as follows. Hydrolyzes ribosome-free peptidyl-tRNAs (with 1 or more amino acids incorporated), which drop off the ribosome during protein synthesis, or as a result of ribosome stalling. Functionally, catalyzes the release of premature peptidyl moieties from peptidyl-tRNA molecules trapped in stalled 50S ribosomal subunits, and thus maintains levels of free tRNAs and 50S ribosomes. The chain is Peptidyl-tRNA hydrolase from Coxiella burnetii (strain CbuK_Q154) (Coxiella burnetii (strain Q154)).